The sequence spans 440 residues: Protein ABHD8 (440 aa).

The disordered stretch occupies residues 123–158; the sequence is DPAGSDGRSAPGSGSGSGSGSGSGGRRRRARRPKRT. A compositionally biased stretch (low complexity) spans 124 to 134; it reads PAGSDGRSAPG. The span at 135-146 shows a compositional bias: gly residues; the sequence is SGSGSGSGSGSG. The span at 147–158 shows a compositional bias: basic residues; sequence GRRRRARRPKRT. The AB hydrolase-1 domain maps to 178–280; sequence VLFFIHGVGG…HKVIMINGGG (103 aa). Catalysis depends on charge relay system residues Ser253, Asp371, and His399.

This sequence belongs to the AB hydrolase superfamily. Interacts with NLRP3 (via NACHT and LLR domains); this interaction is enhanced in the presence of NLRP3 inflammasome inducers, such as ATP, nigericin, silica, or alum. Interacts with ZDHHC12.

The protein localises to the cytoplasm. Functionally, negatively regulates NLRP3-driven inflammation. Promotes NLRP3 degradation through the chaperone-mediated autophagy (CMA) pathway, hence attenuating inflammasome activation and IL1B secretion. Acts by recruiting palmitoyltransferase ZDHHC12 to NLRP3, facilitating NLRP3 palmitoylation and subsequent degradation. This is Protein ABHD8 from Macaca fascicularis (Crab-eating macaque).